A 513-amino-acid chain; its full sequence is MTKLVNEMILVLDFGSQYNQLITRRIREFGVYSELHPHTLTAEEIKKMNPKGIILSGGPNSVYDENSFRCDEKIFELDIPVLGICYGMQLMTHYLGGKVEAASQREYGKANIRIEGTPDLFRDLPNEQVVWMSHGDLVVEVPEGFTVDATSHHCPNSAMSKADKKWYGVQFHPEVRHSEYGNDLLKNFVFGVCECEGEWSMENFIEIEMQKIRETVGDKQVLCALSGGVDSSVVAVLIHKAIGDQLTCIFVDHGLLRKGEAEGVMKTFSEGFNMNVIKVDAKDRFLNKLKGVSDPEQKRKIIGNEFIYVFDDEADKLKGIDYLAQGTLYTDIIESGTATAQTIKSHHNVGGLPEDMQFELIEPLNTLFKDEVRALGTELGIPDEIVWRQPFPGPGLGIRVLGEVTEEKLEIVRESDAILREEIANHGLERDIWQYFTVLPDIRSVGVMGDARTYDYTIGIRAVTSIDGMTSDWARIPWDVLEVISTRIVNEVKHINRVVYDITSKPPATIEWE.

Residues 8-198 form the Glutamine amidotransferase type-1 domain; it reads MILVLDFGSQ…VFGVCECEGE (191 aa). Cysteine 85 acts as the Nucleophile in catalysis. Catalysis depends on residues histidine 172 and glutamate 174. Residues 199–388 enclose the GMPS ATP-PPase domain; that stretch reads WSMENFIEIE…LGIPDEIVWR (190 aa). 227 to 233 contributes to the ATP binding site; that stretch reads GGVDSSV.

As to quaternary structure, homodimer.

It carries out the reaction XMP + L-glutamine + ATP + H2O = GMP + L-glutamate + AMP + diphosphate + 2 H(+). It functions in the pathway purine metabolism; GMP biosynthesis; GMP from XMP (L-Gln route): step 1/1. Catalyzes the synthesis of GMP from XMP. The protein is GMP synthase [glutamine-hydrolyzing] (guaA) of Bacillus subtilis (strain 168).